The sequence spans 503 residues: Palmitoleoyl-protein carboxylesterase NOTUM (503 aa).

The N-terminal stretch at 1–19 (MGGEVRVLLLLGLLHWVGG) is a signal peptide. The disordered stretch occupies residues 23–53 (RKTWRRRGQQPPQPPPPPPLPQRAEVEPGAG). The span at 33–43 (PPQPPPPPPLP) shows a compositional bias: pro residues. The residue at position 88 (serine 88) is a Phosphoserine. Residue asparagine 103 is glycosylated (N-linked (GlcNAc...) asparagine). Active-site charge relay system residues include serine 239, aspartate 347, and histidine 396.

This sequence belongs to the pectinacetylesterase family. Notum subfamily. In terms of tissue distribution, widely expressed. Expressed in lung, ovary, kidney, liver and brain. Not detected in thymus, heart, spleen, stomach, skeletal muscle and bone marrow.

Its subcellular location is the secreted. The enzyme catalyses [Wnt protein]-O-(9Z)-hexadecenoyl-L-serine + H2O = [Wnt protein]-L-serine + (9Z)-hexadecenoate + H(+). Carboxylesterase that acts as a key negative regulator of the Wnt signaling pathway by specifically mediating depalmitoleoylation of WNT proteins. Serine palmitoleoylation of WNT proteins is required for efficient binding to frizzled receptors. This chain is Palmitoleoyl-protein carboxylesterase NOTUM, found in Mus musculus (Mouse).